The following is a 108-amino-acid chain: Parvalbumin beta 2 (108 aa).

An N-acetylserine modification is found at S2. 2 EF-hand domains span residues 38–73 (KSSDDVKKAFYVIDQDKSGFIEEDELKLFLQNFSAS) and 77–108 (LTDAETKAFLADGDKDGDGMIGVDEFAAMIKG). Residues D51, D53, S55, F57, E59, E62, D90, D92, D94, M96, and E101 each contribute to the Ca(2+) site.

It belongs to the parvalbumin family.

In terms of biological role, in muscle, parvalbumin is thought to be involved in relaxation after contraction. It binds two calcium ions. The chain is Parvalbumin beta 2 from Salmo salar (Atlantic salmon).